A 177-amino-acid polypeptide reads, in one-letter code: Cell division protein ZapC (177 aa).

This sequence belongs to the ZapC family. In terms of assembly, interacts directly with FtsZ.

Its subcellular location is the cytoplasm. Its function is as follows. Contributes to the efficiency of the cell division process by stabilizing the polymeric form of the cell division protein FtsZ. Acts by promoting interactions between FtsZ protofilaments and suppressing the GTPase activity of FtsZ. The sequence is that of Cell division protein ZapC from Shewanella oneidensis (strain ATCC 700550 / JCM 31522 / CIP 106686 / LMG 19005 / NCIMB 14063 / MR-1).